The primary structure comprises 262 residues: Expansin-A21 (262 aa).

The first 29 residues, 1-29, serve as a signal peptide directing secretion; the sequence is MKLLEKMTYVECFMIIMATWFMFISYSHG. One can recognise an Expansin-like EG45 domain in the interval 64–169; that stretch reads EGACGYGDLN…RRVPCAKTGG (106 aa). The 80-residue stretch at 179–258 folds into the Expansin-like CBD domain; that stretch reads NILTILPYNV…SWGFGQTFDG (80 aa).

It belongs to the expansin family. Expansin A subfamily.

It is found in the secreted. The protein resides in the cell wall. The protein localises to the membrane. Functionally, causes loosening and extension of plant cell walls by disrupting non-covalent bonding between cellulose microfibrils and matrix glucans. No enzymatic activity has been found. The polypeptide is Expansin-A21 (EXPA21) (Arabidopsis thaliana (Mouse-ear cress)).